A 228-amino-acid polypeptide reads, in one-letter code: L-ribulose-5-phosphate 4-epimerase UlaF (228 aa).

Residues 26–27, 43–44, and 72–73 each bind substrate; these read GN, SG, and SS. Positions 74, 93, and 95 each coordinate Zn(2+). Asp118 acts as the Proton donor/acceptor in catalysis. His167 is a Zn(2+) binding site. Tyr225 acts as the Proton donor/acceptor in catalysis.

Belongs to the aldolase class II family. AraD/FucA subfamily. Requires Zn(2+) as cofactor.

It catalyses the reaction L-ribulose 5-phosphate = D-xylulose 5-phosphate. Its pathway is cofactor degradation; L-ascorbate degradation; D-xylulose 5-phosphate from L-ascorbate: step 4/4. In terms of biological role, catalyzes the isomerization of L-ribulose 5-phosphate to D-xylulose 5-phosphate. Is involved in the anaerobic L-ascorbate utilization. This Escherichia coli (strain ATCC 8739 / DSM 1576 / NBRC 3972 / NCIMB 8545 / WDCM 00012 / Crooks) protein is L-ribulose-5-phosphate 4-epimerase UlaF.